Here is a 329-residue protein sequence, read N- to C-terminus: uncharacterized protein (329 aa).

A run of 10 helical transmembrane segments spans residues 9–29 (LMGL…NVIV), 53–73 (SHSF…MALI), 105–125 (FLMF…PTGI), 126–146 (AITL…RLFN), 154–174 (WLVI…AYGG), 179–199 (LVLG…YTVF), 210–230 (VPFT…CLII), 240–260 (WLAI…GHVL), 273–293 (AAII…LAIQ), and 296–316 (LTNI…LLNY). EamA domains follow at residues 103 to 169 (CGFL…LTIP) and 191 to 316 (IVYA…LLNY).

This sequence belongs to the EamA transporter family.

It localises to the cell membrane. This is an uncharacterized protein from Synechocystis sp. (strain ATCC 27184 / PCC 6803 / Kazusa).